We begin with the raw amino-acid sequence, 107 residues long: Iron-binding protein IscA (107 aa).

The Fe cation site is built by cysteine 35, cysteine 99, and cysteine 101.

It belongs to the HesB/IscA family. Homodimer; may form tetramers and higher multimers. It depends on Fe cation as a cofactor.

In terms of biological role, is able to transfer iron-sulfur clusters to apo-ferredoxin. Multiple cycles of [2Fe2S] cluster formation and transfer are observed, suggesting that IscA acts catalytically. Recruits intracellular free iron so as to provide iron for the assembly of transient iron-sulfur cluster in IscU in the presence of IscS, L-cysteine and the thioredoxin reductase system TrxA/TrxB. This is Iron-binding protein IscA from Photorhabdus laumondii subsp. laumondii (strain DSM 15139 / CIP 105565 / TT01) (Photorhabdus luminescens subsp. laumondii).